Reading from the N-terminus, the 197-residue chain is Nucleoid occlusion factor SlmA (197 aa).

Positions 7–67 (ISRREHILQC…GLIEFIEDSL (61 aa)) constitute an HTH tetR-type domain. Positions 30 to 49 (TTAKLAAEVGVSEAALYRHF) form a DNA-binding region, H-T-H motif.

It belongs to the nucleoid occlusion factor SlmA family. As to quaternary structure, homodimer. Interacts with FtsZ.

The protein resides in the cytoplasm. It is found in the nucleoid. Required for nucleoid occlusion (NO) phenomenon, which prevents Z-ring formation and cell division over the nucleoid. Acts as a DNA-associated cell division inhibitor that binds simultaneously chromosomal DNA and FtsZ, and disrupts the assembly of FtsZ polymers. SlmA-DNA-binding sequences (SBS) are dispersed on non-Ter regions of the chromosome, preventing FtsZ polymerization at these regions. In Shewanella amazonensis (strain ATCC BAA-1098 / SB2B), this protein is Nucleoid occlusion factor SlmA.